The primary structure comprises 551 residues: MYCVQCEQTMVTPMGNGCSFGQGMCGKTAETSDLQDLLIACLHSLSAWALKAREHGIINHDADNFAPRAFFATLTNVNFDSNRIVGYAQQAIIYRNELIKAISEVEPNPELNHPLAHIELKGISIDQLAEQAKEFALDTDRAEIGEEVHGVRLLALYGLKGAAAYLEHAYVLGKFDNDLYVEYHGFMAWLGTKPSDLNELLEKSLAIGSMNFKVMAMLDAGETETFGNPVPATVNIRPVKGKCILISGHDLKDLKELLEQTEGKGINVYTHGEMLPAHGYPELKKYKHLVGNYGSGWQNQQKEFARFPGAIVMTSNCLIDPNVGDYADRIFTCNIVGWPGVVHLEKHNFAPVIEKALECDGFPYTELEHYITVGFGRKTLIDASDAVIDLVKAGKLSHVFVIGGCDGDKEERHYYTDLAYALPKDTAVLTLGCGKYRFNKLDFGTIDGGLPRLLDAGQCNDTYSAIMLAVTLSQKLGIGLNELPLSIVLSWFEQKAIIVLLTLLALGVKNVYSGPSKPAFLNDNVMNLLHEKFGLSGLTTPEQDFGHIINK.

Cysteine 3, cysteine 6, cysteine 18, and cysteine 25 together coordinate [2Fe-2S] cluster. 8 residues coordinate hybrid [4Fe-2O-2S] cluster: histidine 249, glutamate 273, cysteine 317, cysteine 405, cysteine 433, cysteine 459, glutamate 493, and lysine 495. Cysteine persulfide is present on cysteine 405.

The protein belongs to the HCP family. [2Fe-2S] cluster is required as a cofactor. It depends on hybrid [4Fe-2O-2S] cluster as a cofactor.

Its subcellular location is the cytoplasm. The catalysed reaction is A + NH4(+) + H2O = hydroxylamine + AH2 + H(+). Catalyzes the reduction of hydroxylamine to form NH(3) and H(2)O. This chain is Hydroxylamine reductase, found in Actinobacillus pleuropneumoniae serotype 5b (strain L20).